Consider the following 90-residue polypeptide: Accessory gland-specific peptide 26Ab (90 aa).

The signal sequence occupies residues 1 to 21; it reads MNYFAVICIFSCICLWQFSDA.

In terms of tissue distribution, main cells and secondary cells of the accessory glands of 1 day old virgin males (at protein level). In 5 day old virgin males, only detected in the secondary cells (at protein level). Reappears in the main cells after mating (at protein level). First detected in adult males 3-4 hr after eclosion, levels increase reaching a peak at day 3-5 which is maintained until at least day 10 of adulthood (at protein level). In unmated male adults, levels are maintained for the first 6 days of adulthood and then gradually decrease for at least the next 8 days. No expression in females.

The protein resides in the secreted. The protein localises to the extracellular space. Its subcellular location is the cytoplasm. Functionally, this protein is transferred from male to female during mating and may affect egglaying and behavior after mating. The chain is Accessory gland-specific peptide 26Ab from Drosophila melanogaster (Fruit fly).